The primary structure comprises 92 residues: MFLYVIAYDIPDDRRRKKMADLLEGYGQRVQYSVFECTLSKSKFNELQKRLRKIYQSEEDSLRFYPLSGHTLTQVDIWGEPPLTKPPGSVIV.

Aspartate 9 lines the Mg(2+) pocket.

Belongs to the CRISPR-associated endoribonuclease Cas2 protein family. Homodimer, forms a heterotetramer with a Cas1 homodimer. Requires Mg(2+) as cofactor.

Functionally, CRISPR (clustered regularly interspaced short palindromic repeat), is an adaptive immune system that provides protection against mobile genetic elements (viruses, transposable elements and conjugative plasmids). CRISPR clusters contain sequences complementary to antecedent mobile elements and target invading nucleic acids. CRISPR clusters are transcribed and processed into CRISPR RNA (crRNA). Functions as a ssRNA-specific endoribonuclease. Involved in the integration of spacer DNA into the CRISPR cassette. The polypeptide is CRISPR-associated endoribonuclease Cas2 3 (Synechocystis sp. (strain ATCC 27184 / PCC 6803 / Kazusa)).